The following is a 337-amino-acid chain: tRNA N6-adenosine threonylcarbamoyltransferase (337 aa).

Residues H111 and H115 each coordinate Fe cation. Substrate is bound by residues 134-138, D167, G180, and N272; that span reads LVSGG. Residue D300 participates in Fe cation binding.

It belongs to the KAE1 / TsaD family. Requires Fe(2+) as cofactor.

It localises to the cytoplasm. It carries out the reaction L-threonylcarbamoyladenylate + adenosine(37) in tRNA = N(6)-L-threonylcarbamoyladenosine(37) in tRNA + AMP + H(+). Required for the formation of a threonylcarbamoyl group on adenosine at position 37 (t(6)A37) in tRNAs that read codons beginning with adenine. Is involved in the transfer of the threonylcarbamoyl moiety of threonylcarbamoyl-AMP (TC-AMP) to the N6 group of A37, together with TsaE and TsaB. TsaD likely plays a direct catalytic role in this reaction. In Erwinia tasmaniensis (strain DSM 17950 / CFBP 7177 / CIP 109463 / NCPPB 4357 / Et1/99), this protein is tRNA N6-adenosine threonylcarbamoyltransferase.